We begin with the raw amino-acid sequence, 309 residues long: Methionyl-tRNA formyltransferase (309 aa).

112–115 (SLLP) serves as a coordination point for (6S)-5,6,7,8-tetrahydrofolate.

It belongs to the Fmt family.

The enzyme catalyses L-methionyl-tRNA(fMet) + (6R)-10-formyltetrahydrofolate = N-formyl-L-methionyl-tRNA(fMet) + (6S)-5,6,7,8-tetrahydrofolate + H(+). Attaches a formyl group to the free amino group of methionyl-tRNA(fMet). The formyl group appears to play a dual role in the initiator identity of N-formylmethionyl-tRNA by promoting its recognition by IF2 and preventing the misappropriation of this tRNA by the elongation apparatus. This chain is Methionyl-tRNA formyltransferase, found in Bartonella quintana (strain Toulouse) (Rochalimaea quintana).